Reading from the N-terminus, the 312-residue chain is HTH-type transcriptional regulator TdcA (312 aa).

Residues 7-64 (PKTQHLVVFQEVIRSGSIGSAAKELGLTQPAVSKIINDIEDYFGVELVVRKNTGVTLT) enclose the HTH lysR-type domain. A DNA-binding region (H-T-H motif) is located at residues 24 to 43 (IGSAAKELGLTQPAVSKIIN).

Belongs to the LysR transcriptional regulatory family.

It participates in amino-acid degradation; L-threonine degradation via propanoate pathway [regulation]. Transcriptional activator for the tdcABCDE operon. This is HTH-type transcriptional regulator TdcA (tdcA) from Escherichia coli O157:H7.